We begin with the raw amino-acid sequence, 87 residues long: MSGTFSWTHLLIIALLFVVLFGAKRLPDAARGLGRSLRIFKSEVNQMQHETPQANAAPVQQPAQQLPPAQPAQAPAQPVNQAEQKSA.

The chain crosses the membrane as a helical span at residues 3 to 23 (GTFSWTHLLIIALLFVVLFGA). A disordered region spans residues 47 to 87 (MQHETPQANAAPVQQPAQQLPPAQPAQAPAQPVNQAEQKSA). Residues 52-87 (PQANAAPVQQPAQQLPPAQPAQAPAQPVNQAEQKSA) are compositionally biased toward low complexity.

The protein belongs to the TatA/E family. The Tat system comprises two distinct complexes: a TatABC complex, containing multiple copies of TatA, TatB and TatC subunits, and a separate TatA complex, containing only TatA subunits. Substrates initially bind to the TatABC complex, which probably triggers association of the separate TatA complex to form the active translocon.

It localises to the cell membrane. Functionally, part of the twin-arginine translocation (Tat) system that transports large folded proteins containing a characteristic twin-arginine motif in their signal peptide across membranes. TatA could form the protein-conducting channel of the Tat system. The chain is Sec-independent protein translocase protein TatA from Nocardia farcinica (strain IFM 10152).